Consider the following 490-residue polypeptide: Betaine aldehyde dehydrogenase (490 aa).

Residues Thr-26 and Asp-93 each contribute to the K(+) site. NAD(+) is bound at residue 150 to 152; sequence GAW. Residue Lys-162 is the Charge relay system of the active site. 176–179 is an NAD(+) binding site; it reads KPSE. K(+) is bound at residue Val-180. 230–233 is an NAD(+) binding site; the sequence is GVAT. Leu-246 provides a ligand contact to K(+). Residue Glu-252 is the Proton acceptor of the active site. NAD(+)-binding residues include Gly-254, Cys-286, and Glu-387. Catalysis depends on Cys-286, which acts as the Nucleophile. Residue Cys-286 is modified to Cysteine sulfenic acid (-SOH). Lys-457 and Gly-460 together coordinate K(+). Glu-464 (charge relay system) is an active-site residue.

The protein belongs to the aldehyde dehydrogenase family. In terms of assembly, dimer of dimers. Requires K(+) as cofactor.

It catalyses the reaction betaine aldehyde + NAD(+) + H2O = glycine betaine + NADH + 2 H(+). It functions in the pathway amine and polyamine biosynthesis; betaine biosynthesis via choline pathway; betaine from betaine aldehyde: step 1/1. Involved in the biosynthesis of the osmoprotectant glycine betaine. Catalyzes the irreversible oxidation of betaine aldehyde to the corresponding acid. The sequence is that of Betaine aldehyde dehydrogenase from Stenotrophomonas maltophilia (strain K279a).